Consider the following 248-residue polypeptide: tRNA pseudouridine synthase A (248 aa).

The active-site Nucleophile is Asp-53. Position 116 (Tyr-116) interacts with substrate.

This sequence belongs to the tRNA pseudouridine synthase TruA family. Homodimer.

It catalyses the reaction uridine(38/39/40) in tRNA = pseudouridine(38/39/40) in tRNA. Functionally, formation of pseudouridine at positions 38, 39 and 40 in the anticodon stem and loop of transfer RNAs. This is tRNA pseudouridine synthase A from Helicobacter hepaticus (strain ATCC 51449 / 3B1).